A 142-amino-acid polypeptide reads, in one-letter code: Hemoglobin subunit alpha-1/2 (142 aa).

The 141-residue stretch at 2–142 (VLSADDKTNI…VSTVLTSKYR (141 aa)) folds into the Globin domain. The residue at position 4 (serine 4) is a Phosphoserine. Lysine 8 is modified (N6-succinyllysine). A Phosphothreonine modification is found at threonine 9. Position 12 is an N6-succinyllysine (lysine 12). An N6-acetyllysine; alternate modification is found at lysine 17. N6-succinyllysine; alternate is present on lysine 17. Tyrosine 25 is modified (phosphotyrosine). At lysine 41 the chain carries N6-succinyllysine. The residue at position 50 (serine 50) is a Phosphoserine. Histidine 59 serves as a coordination point for O2. Histidine 88 contributes to the heme b binding site. Serine 103 is modified (phosphoserine). The residue at position 109 (threonine 109) is a Phosphothreonine. Phosphoserine is present on residues serine 125 and serine 132. Threonine 135 and threonine 138 each carry phosphothreonine. Phosphoserine is present on serine 139.

It belongs to the globin family. In terms of assembly, heterotetramer of two alpha chains and two beta chains. Red blood cells.

In terms of biological role, involved in oxygen transport from the lung to the various peripheral tissues. Functionally, hemopressin acts as an antagonist peptide of the cannabinoid receptor CNR1. Hemopressin-binding efficiently blocks cannabinoid receptor CNR1 and subsequent signaling. This chain is Hemoglobin subunit alpha-1/2 (Hba1), found in Rattus norvegicus (Rat).